Consider the following 152-residue polypeptide: MLP-like protein 165 (152 aa).

It belongs to the MLP family.

In Arabidopsis thaliana (Mouse-ear cress), this protein is MLP-like protein 165 (MLP165).